We begin with the raw amino-acid sequence, 452 residues long: NADH-cytochrome b5 reductase-like protein alnC (452 aa).

One can recognise a Cytochrome b5 heme-binding domain in the interval 4-80 (PASITLAEVA…LKTLLVGSLQ (77 aa)). Residue 33–38 (AEYRED) coordinates FMN. Heme is bound by residues His-39 and His-63. FMN contacts are provided by residues 80–83 (QSKT) and 116–125 (NDTSKYGQLP). Helical transmembrane passes span 120 to 140 (KYGQ…FFTL) and 166 to 186 (VGFL…ATFV). In terms of domain architecture, FAD-binding FR-type spans 225-324 (NTQQFLTLVD…RGPFGRYSPS (100 aa)). Residue 302–305 (YLLN) participates in FAD binding. NADP(+) contacts are provided by residues 389-390 (GQ) and 395-399 (WKGLR).

Belongs to the flavoprotein pyridine nucleotide cytochrome reductase family. FAD serves as cofactor. FMN is required as a cofactor.

Its subcellular location is the membrane. It functions in the pathway polyketide biosynthesis. In terms of biological role, NADH-cytochrome b5 reductase-like protein; part of the gene cluster that mediates the biosynthesis of asperlin, a polyketide showing anti-inflammatory, antitumor and antibiotic activities. The first step of the asperlin biosynthesis is the production of the intermediate 2,4,6-octatrienoic acid by the highly redusing polyketide synthase alnA with cleavage of the PKS product by the esterase alnB. 2,4,6-octatrienoic acid is further converted to asperlin via several steps involving the remaining enzymes from the cluster. The polypeptide is NADH-cytochrome b5 reductase-like protein alnC (Emericella nidulans (strain FGSC A4 / ATCC 38163 / CBS 112.46 / NRRL 194 / M139) (Aspergillus nidulans)).